Reading from the N-terminus, the 704-residue chain is DNA-directed DNA polymerase (704 aa).

The 3'-5'exonuclease stretch occupies residues 1-187 (MIVSDIEANA…TKALLEKLLS (187 aa)). Mg(2+)-binding residues include Asp-5, Glu-7, and Asp-174. The tract at residues 202-704 (GYTTFWSESL…KMGPNWAICH (503 aa)) is polymerase. Residues 262 to 338 (GSWYQPKGGT…VEHVVFNPSS (77 aa)) are binding to host TrxA. The Mg(2+) site is built by Asp-475 and Ala-476. Substrate contacts are provided by His-506, Arg-518, Lys-522, and Tyr-526. Asp-654 contributes to the Mg(2+) binding site.

Belongs to the DNA polymerase type-A family. As to quaternary structure, composed of two subunits. One is encoded by the phage and the other is encoded by the host thioredoxin. Interacts with DNA primase/helicase; this interaction is essential for the coordination of DNA unwinding and nucleotide polymerization on duplex DNA. Interacts with the ssDNA-binding protein. Part of the replicase complex that includes the DNA polymerase, thioredoxin, the primase/helicase and the single-stranded DNA binding protein. Mg(2+) is required as a cofactor.

The enzyme catalyses DNA(n) + a 2'-deoxyribonucleoside 5'-triphosphate = DNA(n+1) + diphosphate. Replicates viral genomic DNA. This polymerase possesses two enzymatic activities: DNA synthesis (polymerase) and an exonucleolytic activity that degrades single-stranded DNA in the 3'-5' direction. Non-processive DNA polymerase that achieves processivity by binding to host thioredoxin (TrxA). This interaction increases the rate of dNTP incorporation to yield a processivity of approximately 800 nucleotides (nt) per binding event. Interacts with DNA helicase gp4 to coordinate nucleotide polymerization with unwinding of the DNA. The leading strand is synthesized continuously while synthesis of the lagging strand requires the synthesis of oligoribonucleotides by the primase domain of gp4. The chain is DNA-directed DNA polymerase from Escherichia phage T7 (Bacteriophage T7).